The sequence spans 131 residues: Small ribosomal subunit protein uS19 (131 aa).

Belongs to the universal ribosomal protein uS19 family.

Functionally, protein S19 forms a complex with S13 that binds strongly to the 16S ribosomal RNA. This chain is Small ribosomal subunit protein uS19, found in Cenarchaeum symbiosum (strain A).